Here is a 361-residue protein sequence, read N- to C-terminus: tRNA 2-selenouridine synthase (361 aa).

In terms of domain architecture, Rhodanese spans 11–134 (ALLERPLIDV…MRQCVNAEIE (124 aa)). Residue cysteine 94 is the S-selanylcysteine intermediate of the active site.

This sequence belongs to the SelU family. In terms of assembly, monomer.

The catalysed reaction is 5-methylaminomethyl-2-thiouridine(34) in tRNA + selenophosphate + (2E)-geranyl diphosphate + H2O + H(+) = 5-methylaminomethyl-2-selenouridine(34) in tRNA + (2E)-thiogeraniol + phosphate + diphosphate. It carries out the reaction 5-methylaminomethyl-2-thiouridine(34) in tRNA + (2E)-geranyl diphosphate = 5-methylaminomethyl-S-(2E)-geranyl-thiouridine(34) in tRNA + diphosphate. The enzyme catalyses 5-methylaminomethyl-S-(2E)-geranyl-thiouridine(34) in tRNA + selenophosphate + H(+) = 5-methylaminomethyl-2-(Se-phospho)selenouridine(34) in tRNA + (2E)-thiogeraniol. It catalyses the reaction 5-methylaminomethyl-2-(Se-phospho)selenouridine(34) in tRNA + H2O = 5-methylaminomethyl-2-selenouridine(34) in tRNA + phosphate. In terms of biological role, involved in the post-transcriptional modification of the uridine at the wobble position (U34) of tRNA(Lys), tRNA(Glu) and tRNA(Gln). Catalyzes the conversion of 2-thiouridine (S2U-RNA) to 2-selenouridine (Se2U-RNA). Acts in a two-step process involving geranylation of 2-thiouridine (S2U) to S-geranyl-2-thiouridine (geS2U) and subsequent selenation of the latter derivative to 2-selenouridine (Se2U) in the tRNA chain. This is tRNA 2-selenouridine synthase from Chromohalobacter salexigens (strain ATCC BAA-138 / DSM 3043 / CIP 106854 / NCIMB 13768 / 1H11).